An 819-amino-acid polypeptide reads, in one-letter code: THO complex subunit 5B (819 aa).

The interval 285–332 (ARQQSRKDSGMSSNTESSRLEDDGPDDDDDGQRRRKRPKKLTSKEGSD) is disordered.

This sequence belongs to the THOC5 family. In terms of assembly, component of the THO complex, which is composed of THO1, THO2, THO3, THO5, THO6 and THO7.

It localises to the nucleus. Acts as a component of the THO subcomplex of the TREX complex which is thought to couple mRNA transcription, processing and nuclear export. The sequence is that of THO complex subunit 5B (THO5B) from Arabidopsis thaliana (Mouse-ear cress).